Consider the following 327-residue polypeptide: GMP reductase (327 aa).

The active-site Thioimidate intermediate is cysteine 176. 205–228 (IIADGGIRTHGDIAKSIRFGASMV) lines the NADP(+) pocket.

This sequence belongs to the IMPDH/GMPR family. GuaC type 2 subfamily.

The enzyme catalyses IMP + NH4(+) + NADP(+) = GMP + NADPH + 2 H(+). Functionally, catalyzes the irreversible NADPH-dependent deamination of GMP to IMP. It functions in the conversion of nucleobase, nucleoside and nucleotide derivatives of G to A nucleotides, and in maintaining the intracellular balance of A and G nucleotides. The polypeptide is GMP reductase (Streptococcus pyogenes serotype M3 (strain ATCC BAA-595 / MGAS315)).